The chain runs to 630 residues: 1-deoxy-D-xylulose-5-phosphate synthase (630 aa).

Residues His-72 and 113 to 115 (GHS) contribute to the thiamine diphosphate site. Asp-144 lines the Mg(2+) pocket. Residues 145–146 (GA), Asn-173, Tyr-284, and Glu-367 contribute to the thiamine diphosphate site. Asn-173 serves as a coordination point for Mg(2+).

Belongs to the transketolase family. DXPS subfamily. In terms of assembly, homodimer. Mg(2+) serves as cofactor. Thiamine diphosphate is required as a cofactor.

It carries out the reaction D-glyceraldehyde 3-phosphate + pyruvate + H(+) = 1-deoxy-D-xylulose 5-phosphate + CO2. It participates in metabolic intermediate biosynthesis; 1-deoxy-D-xylulose 5-phosphate biosynthesis; 1-deoxy-D-xylulose 5-phosphate from D-glyceraldehyde 3-phosphate and pyruvate: step 1/1. Catalyzes the acyloin condensation reaction between C atoms 2 and 3 of pyruvate and glyceraldehyde 3-phosphate to yield 1-deoxy-D-xylulose-5-phosphate (DXP). This is 1-deoxy-D-xylulose-5-phosphate synthase from Bacillus cereus (strain ATCC 10987 / NRS 248).